The sequence spans 373 residues: Core trichothecene cluster (CTC) protein 14 (373 aa).

Belongs to the TRI14 family.

In terms of biological role, part of the core gene cluster that mediates the biosynthesis of trichothecenes, a very large family of chemically related bicyclic sesquiterpene compounds acting as mycotoxins, including T2-toxin. The biosynthesis of trichothecenes begins with the cyclization of farnesyl diphosphate to trichodiene and is catalyzed by the trichodiene synthase TRI5. Trichodiene undergoes a series of oxygenations catalyzed by the cytochrome P450 monooxygenase TRI4. TRI4 controls the addition of four oxygens at C-2, C-3, C-11, and the C-12, C-13-epoxide to form the intermediate isotrichotriol. Isotrichotriol then undergoes a non-enzymatic isomerization and cyclization to form isotrichodermol. During this process, the oxygen at the C-2 position becomes the pyran ring oxygen and the hydroxyl group at C-11 is lost. More complex type A trichothecenes are built by modifying isotrichodermol through a series of paired hydroxylation and acetylation or acylation steps. Isotrichodermol is converted to isotrichodermin by the acetyltransferase TRI101. TRI101 encodes a C-3 transacetylase that acts as a self-protection or resistance factor during biosynthesis and that the presence of a free C-3 hydroxyl group is a key component of Fusarium trichothecene phytotoxicity. A second hydroxyl group is added to C-15 by the trichothecene C-15 hydroxylase TRI11, producing 15-decalonectrin, which is then acetylated by TRI3, producing calonectrin. A third hydroxyl group is added at C-4 by the cytochrome P450 monooxygenase TRI13, converting calonectrin to 3,15-diacetoxyspirpenol, which is subsequently acetylated bythe acetyltransferase TRI7. A fourth hydroxyl group is added to C-8 by the cytochrome P450 monooxygenase TRI1, followed by the addition of an isovaleryl moiety by TRI16. Finally, the acetyl group is removed from the C-3 position by the trichothecene C-3 esterase TRI8 to produce T-2 toxin. The polypeptide is Core trichothecene cluster (CTC) protein 14 (Fusarium sporotrichioides).